Reading from the N-terminus, the 1483-residue chain is Tyrosine-protein kinase BAZ1B (1483 aa).

The WAC domain occupies 20-126; sequence EPLFTIPHTQ…GEECDFEVGK (107 aa). Residues 145-212 are disordered; the sequence is EEATEKKSDG…TSLKKGERKW (68 aa). 2 stretches are compositionally biased toward basic and acidic residues: residues 148–165 and 172–195; these read TEKKSDGACDSPSSDKEN and DHQKKETVVKEDEGRRESINDRAR. 3 positions are modified to phosphoserine: S152, S158, and S161. A C motif motif is present at residues 207 to 213; the sequence is KGERKWA. Phosphothreonine is present on T266. Positions 302–333 are disordered; the sequence is NPSTKRKNTGSPDRKPSKKSKTDNSSLSSPLN. Phosphoserine is present on residues S330, S345, S347, S349, S361, and S374. 2 disordered regions span residues 379–432 and 446–470; these read HTNF…KTPK and GTQKMTRAPRNSGGTPRTSSKPHKH. 2 stretches are compositionally biased toward basic residues: residues 384–395 and 423–432; these read IPKKGPPAKKPG and SPKKGLKTPK. Positions 533–586 form a coiled coil; the sequence is KRWASMSEEQRKEYLKKKREELKKKLKEKAKERREKEMLERLEKQKRYEDQELT. The DDT domain occupies 604–668; it reads NTLFGDVAMV…LQTLLQDEIA (65 aa). 4 positions are modified to phosphoserine: S699, S705, S708, and S716. A coiled-coil region spans residues 768–814; that stretch reads TRQQMSAELWKERLAVLKEENDKKRAEKQKRKEMEAKNKENGKVENG. The span at 788 to 810 shows a compositional bias: basic and acidic residues; sequence NDKKRAEKQKRKEMEAKNKENGK. Residues 788 to 817 are disordered; it reads NDKKRAEKQKRKEMEAKNKENGKVENGLGK. K826 is covalently cross-linked (Glycyl lysine isopeptide (Lys-Gly) (interchain with G-Cter in SUMO1); alternate). Residue K826 forms a Glycyl lysine isopeptide (Lys-Gly) (interchain with G-Cter in SUMO2); alternate linkage. Residues 850–893 are a coiled coil; it reads IQAKKEREIQEREMKVKLERQAEEERIRKHKAAAEKAFQEGIAK. Residue K853 forms a Glycyl lysine isopeptide (Lys-Gly) (interchain with G-Cter in SUMO2) linkage. Phosphoserine is present on S947. Residues K1043, K1089, and K1107 each participate in a glycyl lysine isopeptide (Lys-Gly) (interchain with G-Cter in SUMO2) cross-link. Residues 1184–1234 form a PHD-type zinc finger; that stretch reads NARCKVCRKKGEDDKLILCDECNKAFHLFCLRPALYEVPDGEWQCPACQPA. Residues 1237–1326 are disordered; the sequence is RRNSRGRNYT…PKAPPVDDAE (90 aa). Residues 1245 to 1283 are a coiled coil; sequence YTEESASEDSEDDESDEEEEEEEEEEEEEDYEVAGLRLR. Residues 1249-1276 show a composition bias toward acidic residues; it reads SASEDSEDDESDEEEEEEEEEEEEEDYE. Composition is skewed to basic residues over residues 1282–1292 and 1301–1316; these read LRPRKTIRGKH and SGRRPGKKPHSTRRSQ. Position 1315 is a phosphoserine (S1315). N6-acetyllysine is present on K1335. A Bromo domain is found at 1339 to 1443; sequence RRQSLELQKC…QCLVALLHKH (105 aa). Phosphoserine is present on residues S1342 and S1468. The tract at residues 1455 to 1483 is disordered; it reads KKFPDRLAEDEGDSEPEAVGQSRGRRQKK.

This sequence belongs to the WAL family. BAZ1B subfamily. Component of the WICH-1 ISWI chromatin remodeling complex, at least composed of SMARCA1 and BAZ1B/WSTF, which regulates the spacing of histone octamers on the DNA template to facilitate access to DNA. Within the WICH-1 ISWI chromatin remodeling complex interacts with SMARCA1; the interaction is direct. Component of the WICH-5 ISWI chromatin remodeling complex (also called the WICH complex), at least composed of SMARCA5/SNF2H and BAZ1B/WSTF, which regulates the spacing of histone octamers on the DNA template to facilitate access to DNA. Within the WICH-5 ISWI chromatin remodeling complex interacts with SMARCA5/SNF2H; the interaction is direct. Component of the B-WICH chromatin remodeling complex, at least composed of SMARCA5/SNF2H, BAZ1B/WSTF, SF3B1, DEK, MYO1C, ERCC6, MYBBP1A and DDX21. Within the B-WICH chromatin remodeling complex, interacts with SMARCA5/SNF2H, DDX21, DEK, MYBBP1A, SF3B1, ERCC6 and MYO1C. Interacts with PCNA; the interaction is direct and is required for BAZ1B/WSTF binding to replication foci during S phase. Interacts with CDT1. Mn(2+) serves as cofactor. Ubiquitously expressed with high levels of expression in heart, brain, placenta, skeletal muscle and ovary.

It localises to the nucleus. It carries out the reaction L-tyrosyl-[protein] + ATP = O-phospho-L-tyrosyl-[protein] + ADP + H(+). Functionally, atypical tyrosine-protein kinase that plays a central role in chromatin remodeling and acts as a transcription regulator. Involved in DNA damage response by phosphorylating 'Tyr-142' of histone H2AX (H2AXY142ph). H2AXY142ph plays a central role in DNA repair and acts as a mark that distinguishes between apoptotic and repair responses to genotoxic stress. Regulatory subunit of the ATP-dependent WICH-1 and WICH-5 ISWI chromatin remodeling complexes, which form ordered nucleosome arrays on chromatin and facilitate access to DNA during DNA-templated processes such as DNA replication, transcription, and repair. Both complexes regulate the spacing of nucleosomes along the chromatin and have the ability to slide mononucleosomes to the center of a DNA template. The WICH-1 ISWI chromatin remodeling complex has a lower ATP hydrolysis rate than the WICH-5 ISWI chromatin remodeling complex. The WICH-5 ISWI chromatin-remodeling complex regulates the transcription of various genes, has a role in RNA polymerase I transcription. Within the B-WICH complex has a role in RNA polymerase III transcription. Mediates the recruitment of the WICH-5 ISWI chromatin remodeling complex to replication foci during DNA replication. The chain is Tyrosine-protein kinase BAZ1B (BAZ1B) from Homo sapiens (Human).